We begin with the raw amino-acid sequence, 914 residues long: Eukaryotic initiation factor 4F subunit p130 (914 aa).

Over residues 1–12 (MTDQRGPPPPHP) the composition is skewed to pro residues. 4 disordered regions span residues 1–84 (MTDQ…YNNR), 128–205 (PPYT…NEAV), 240–351 (ERKK…VNKS), and 457–535 (IARN…LVPS). The span at 26–44 (NQYSGANNSQPNNHYNENL) shows a compositional bias: polar residues. The span at 59–73 (KNGKYGTNKYNNRNN) shows a compositional bias: low complexity. Ser-74 carries the post-translational modification Phosphoserine. Positions 145–155 (PKTTKIEITTK) are enriched in low complexity. Over residues 156–195 (TGERLNLKKFHEEKKASKGEEKNDGVEQKSKSGTPFEKEA) the composition is skewed to basic and acidic residues. The residue at position 196 (Thr-196) is a Phosphothreonine. The interaction with PAB1 stretch occupies residues 201–315 (ANEAVKDTLT…TGSVTKSVTF (115 aa)). Residues 240 to 263 (ERKKNGLISETEKKQETSNHDNTD) show a composition bias toward basic and acidic residues. Composition is skewed to polar residues over residues 298 to 325 (SVKTPQHVTGSVTKSVTFNEPENESSSQ) and 339 to 348 (ISDTTGGKTV). At Thr-301 the chain carries Phosphothreonine. Residues 496–529 (RMGDDRRSNRGYTSRKDREKAAEKAEEQAPKEEI) are compositionally biased toward basic and acidic residues. Phosphoserine is present on Ser-503. The region spanning 567–810 (ERKMKSLLNK…IDVKELREIK (244 aa)) is the MIF4G domain. The tract at residues 833 to 914 (QLRQKKNSQR…ALMNNDGDSD (82 aa)) is disordered. Residues 841-867 (QRSNSRFNNHNQSNSNRYSSNRRNMQN) show a composition bias toward low complexity. Residues 868–886 (TQRDSFASTKTGSFRNNQR) are compositionally biased toward polar residues. Ser-913 is modified (phosphoserine).

This sequence belongs to the eukaryotic initiation factor 4G family. As to quaternary structure, component of the eIF4F complex, which composition varies with external and internal environmental conditions. It is composed of at least eIF4A (TIF1/TIF2), eIF4E (TIF45) and eIF4G (TIF4631 or TIF4632). Interacts with PAT1 in a RNA-dependent manner.

Its subcellular location is the cytoplasm. Its function is as follows. Component of the eIF4F complex, which interacts with the mRNA cap structure and serves as an initial point of assembly for the translation apparatus. Stimulates translation by interaction with polyadenylate-binding protein PAB1, bringing the 5'- and 3'-ends of the mRNA in proximity. The formation of this circular mRNP structure appears to be critical for the synergistic effects of the cap and the poly(A) tail in facilitating translation initiation, recycling of ribosomes, and mRNA stability. TIF4632 is probably essential when TIF4631 is missing. In Saccharomyces cerevisiae (strain ATCC 204508 / S288c) (Baker's yeast), this protein is Eukaryotic initiation factor 4F subunit p130.